Reading from the N-terminus, the 88-residue chain is Small ribosomal subunit protein bS20 (88 aa).

It belongs to the bacterial ribosomal protein bS20 family.

Functionally, binds directly to 16S ribosomal RNA. This Bartonella tribocorum (strain CIP 105476 / IBS 506) protein is Small ribosomal subunit protein bS20.